A 210-amino-acid polypeptide reads, in one-letter code: Proteasome subunit beta (210 aa).

A propeptide spans 1-7 (MEVLKTG) (removed in mature form; by autocatalysis). Catalysis depends on Thr8, which acts as the Nucleophile.

Belongs to the peptidase T1B family. The 20S proteasome core is composed of 14 alpha and 14 beta subunits that assemble into four stacked heptameric rings, resulting in a barrel-shaped structure. The two inner rings, each composed of seven catalytic beta subunits, are sandwiched by two outer rings, each composed of seven alpha subunits. The catalytic chamber with the active sites is on the inside of the barrel. Has a gated structure, the ends of the cylinder being occluded by the N-termini of the alpha-subunits. Is capped at one or both ends by the proteasome regulatory ATPase, PAN.

It is found in the cytoplasm. It carries out the reaction Cleavage of peptide bonds with very broad specificity.. The formation of the proteasomal ATPase PAN-20S proteasome complex, via the docking of the C-termini of PAN into the intersubunit pockets in the alpha-rings, triggers opening of the gate for substrate entry. Interconversion between the open-gate and close-gate conformations leads to a dynamic regulation of the 20S proteasome proteolysis activity. In terms of biological role, component of the proteasome core, a large protease complex with broad specificity involved in protein degradation. In Picrophilus torridus (strain ATCC 700027 / DSM 9790 / JCM 10055 / NBRC 100828 / KAW 2/3), this protein is Proteasome subunit beta.